Here is a 356-residue protein sequence, read N- to C-terminus: Phosphate acyltransferase (356 aa).

It belongs to the PlsX family. Homodimer. Probably interacts with PlsY.

The protein resides in the cytoplasm. It carries out the reaction a fatty acyl-[ACP] + phosphate = an acyl phosphate + holo-[ACP]. Its pathway is lipid metabolism; phospholipid metabolism. Catalyzes the reversible formation of acyl-phosphate (acyl-PO(4)) from acyl-[acyl-carrier-protein] (acyl-ACP). This enzyme utilizes acyl-ACP as fatty acyl donor, but not acyl-CoA. This is Phosphate acyltransferase from Escherichia coli (strain 55989 / EAEC).